Here is a 126-residue protein sequence, read N- to C-terminus: Gene 82 protein (126 aa).

The polypeptide is Gene 82 protein (82) (Mycobacterium phage L5 (Mycobacteriophage L5)).